Here is a 138-residue protein sequence, read N- to C-terminus: Large ribosomal subunit protein uL16 (138 aa).

Positions 1-17 are enriched in basic residues; it reads MLIPRKVKHRKQHHPRQ. Positions 1-24 are disordered; sequence MLIPRKVKHRKQHHPRQRGIASGG.

The protein belongs to the universal ribosomal protein uL16 family. Part of the 50S ribosomal subunit.

Functionally, binds 23S rRNA and is also seen to make contacts with the A and possibly P site tRNAs. The protein is Large ribosomal subunit protein uL16 of Mycobacterium ulcerans (strain Agy99).